An 84-amino-acid polypeptide reads, in one-letter code: Large ribosomal subunit protein uL23 (84 aa).

It belongs to the universal ribosomal protein uL23 family. In terms of assembly, part of the 50S ribosomal subunit. Contacts protein L29.

Binds to 23S rRNA. One of the proteins that surrounds the polypeptide exit tunnel on the outside of the ribosome. The sequence is that of Large ribosomal subunit protein uL23 from Halobacterium salinarum (strain ATCC 700922 / JCM 11081 / NRC-1) (Halobacterium halobium).